The chain runs to 131 residues: uncharacterized protein (131 aa).

The tract at residues 15–43 (QLQAEHGSAPSNIASGPSSNQQQQEVQDE) is disordered. A compositionally biased stretch (polar residues) spans 23–34 (APSNIASGPSSN).

This sequence belongs to the PDCD5 family.

This is an uncharacterized protein from Schizosaccharomyces pombe (strain 972 / ATCC 24843) (Fission yeast).